We begin with the raw amino-acid sequence, 449 residues long: Hyaluronidase (449 aa).

The signal sequence occupies residues 1–23 (MYHIWIKFLAAWIFLKRFNGVHV). Intrachain disulfides connect C47–C340 and C211–C227. 3 N-linked (GlcNAc...) asparagine glycosylation sites follow: N67, N103, and N111. The Proton donor role is filled by E135. N153 carries N-linked (GlcNAc...) asparagine glycosylation. An N-linked (GlcNAc...) asparagine glycan is attached at N357. Disulfide bonds link C365–C376, C370–C427, and C429–C438. N401 is a glycosylation site (N-linked (GlcNAc...) asparagine). The 12-residue stretch at 427–438 (CQCYQGWKGLYC) folds into the EGF-like domain.

This sequence belongs to the glycosyl hydrolase 56 family. In terms of assembly, monomer. As to expression, expressed by the venom gland.

Its subcellular location is the secreted. It catalyses the reaction Random hydrolysis of (1-&gt;4)-linkages between N-acetyl-beta-D-glucosamine and D-glucuronate residues in hyaluronate.. In terms of biological role, snake venom endo-hyaluronidase that degrades hyaluronan to smaller oligosaccharide fragments. In venom, it is not toxic by itself, but increases the diffusion of other venom proteins by degrading the extracellular matrix. In addition, it displays antiedematogenic activity. This Echis pyramidum leakeyi (Leakey's carpet viper) protein is Hyaluronidase.